Here is a 263-residue protein sequence, read N- to C-terminus: Probable WRKY transcription factor 62 (263 aa).

The disordered stretch occupies residues 59–104; the sequence is DHQDDQSNNSSPQDSSPVLESSRKPLHKRGRKTSMAESSDYHRHES. Low complexity predominate over residues 64–74; that stretch reads QSNNSSPQDSS. The segment at residues 104–174 is a DNA-binding region (WRKY); sequence SSTPIYHDGF…GQHICQLHQA (71 aa).

It belongs to the WRKY group III family.

It is found in the nucleus. Transcription factor. Interacts specifically with the W box (5'-(T)TGAC[CT]-3'), a frequently occurring elicitor-responsive cis-acting element. The chain is Probable WRKY transcription factor 62 (WRKY62) from Arabidopsis thaliana (Mouse-ear cress).